A 228-amino-acid chain; its full sequence is DNA-binding response regulator MtrA (228 aa).

One can recognise a Response regulatory domain in the interval 7–120 (RILVVDDDAS…ELVARVRARL (114 aa)). Residue Asp56 is modified to 4-aspartylphosphate. The segment at residues 128–227 (AEMLSIADVE…VRGVGYKAGP (100 aa)) is a DNA-binding region (ompR/PhoB-type).

Phosphorylated by MtrB.

Functionally, member of the two-component regulatory system MtrA/MtrB. The protein is DNA-binding response regulator MtrA (mtrA) of Mycobacterium bovis (strain ATCC BAA-935 / AF2122/97).